The chain runs to 187 residues: Peptidyl-tRNA hydrolase (187 aa).

Y14 contributes to the tRNA binding site. H19 functions as the Proton acceptor in the catalytic mechanism. TRNA is bound by residues Y64, N66, and N112.

Belongs to the PTH family. As to quaternary structure, monomer.

Its subcellular location is the cytoplasm. It catalyses the reaction an N-acyl-L-alpha-aminoacyl-tRNA + H2O = an N-acyl-L-amino acid + a tRNA + H(+). In terms of biological role, hydrolyzes ribosome-free peptidyl-tRNAs (with 1 or more amino acids incorporated), which drop off the ribosome during protein synthesis, or as a result of ribosome stalling. Functionally, catalyzes the release of premature peptidyl moieties from peptidyl-tRNA molecules trapped in stalled 50S ribosomal subunits, and thus maintains levels of free tRNAs and 50S ribosomes. The sequence is that of Peptidyl-tRNA hydrolase from Bdellovibrio bacteriovorus (strain ATCC 15356 / DSM 50701 / NCIMB 9529 / HD100).